The chain runs to 475 residues: Putative histidine permease (475 aa).

The next 12 membrane-spanning stretches (helical) occupy residues 20 to 40 (LFMI…TGYT), 44 to 64 (AGPG…YLVM), 87 to 107 (FIGP…WVVT), 127 to 147 (SVWM…AFSV), 162 to 182 (IVTI…LISL), 199 to 219 (GLFP…SFAF), 246 to 266 (VAWR…GLIS), 277 to 297 (FVAV…NFVI), 341 to 361 (ALMI…VAPG), 363 to 383 (VYVV…MSIA), 410 to 430 (YPLM…GLAF), and 434 to 454 (QRIA…IYHF).

This sequence belongs to the amino acid-polyamine-organocation (APC) superfamily.

Its subcellular location is the cell membrane. In Bacillus subtilis (strain 168), this protein is Putative histidine permease (hutM).